Reading from the N-terminus, the 529-residue chain is Potassium voltage-gated channel subfamily A member 6 (529 aa).

Positions Met1 to Gly33 are disordered. Over Met1–Gly171 the chain is Cytoplasmic. Residue Ser3 is modified to Phosphoserine. The chain crosses the membrane as a helical span at residues Pro172 to Leu193. Residues Glu194–Pro262 lie on the Extracellular side of the membrane. A compositionally biased stretch (low complexity) spans Gly210–Gly220. The tract at residues Gly210 to Thr233 is disordered. A helical membrane pass occupies residues Phe263–Ala284. The S-palmitoyl cysteine moiety is linked to residue Cys285. Over Cys285–Ile295 the chain is Cytoplasmic. A helical membrane pass occupies residues Met296–Val316. At Gln317–Ser337 the chain is on the extracellular side. A helical; Voltage-sensor transmembrane segment spans residues Leu338–His358. The Cytoplasmic segment spans residues Ser359–Met373. Residues Lys360 to Met373 form an S4-S5 linker region. Residues Arg374 to Tyr395 traverse the membrane as a helical segment. Residues Phe396–Ile409 are Extracellular-facing. An intramembrane region (helical) is located at residues Pro410 to Thr421. Positions Thr422 to Asp427 match the Selectivity filter motif. The stretch at Thr422 to Tyr429 is an intramembrane region. Residues Pro430–Lys436 lie on the Extracellular side of the membrane. The helical transmembrane segment at Ile437–Tyr465 threads the bilayer. The Cytoplasmic segment spans residues His466–Val529. The interval Asp488 to Leu513 is disordered. Over residues Asp500–Pro510 the composition is skewed to basic and acidic residues. Ser511 carries the post-translational modification Phosphoserine; by PKA. A PDZ-binding motif is present at residues Thr527–Val529.

The protein belongs to the potassium channel family. A (Shaker) (TC 1.A.1.2) subfamily. Kv1.6/KCNA6 sub-subfamily. In terms of assembly, homotetramer and heterotetramer of potassium channel proteins. Interacts with KCNAB1 and KCNAB2.

Its subcellular location is the cell membrane. It carries out the reaction K(+)(in) = K(+)(out). Its function is as follows. Voltage-gated potassium channel that mediates transmembrane potassium transport in excitable membranes. Forms tetrameric potassium-selective channels through which potassium ions pass in accordance with their electrochemical gradient. The channel alternates between opened and closed conformations in response to the voltage difference across the membrane. Can form functional homotetrameric channels and heterotetrameric channels that contain variable proportions of KCNA1, KCNA2, KCNA4, KCNA6, and possibly other family members as well; channel properties depend on the type of alpha subunits that are part of the channel. Channel properties are modulated by cytoplasmic beta subunits that regulate the subcellular location of the alpha subunits and promote rapid inactivation. Homotetrameric channels display rapid activation and slow inactivation. This chain is Potassium voltage-gated channel subfamily A member 6 (KCNA6), found in Homo sapiens (Human).